Reading from the N-terminus, the 953-residue chain is Serine-aspartate repeat-containing protein C (953 aa).

A signal peptide spans 1–50 (MNNKKTATNRKGMIPNRLNKFSIRKYSVGTASILVGTTLIFGLSGHEAKA). The tract at residues 51-160 (AEHTNGELNQ…AKNVSTTPKT (110 aa)) is disordered. Positions 51 to 495 (AEHTNGELNQ…GSSTANGDQK (445 aa)) are ligand binding A region. Polar residues predominate over residues 56–71 (GELNQSKNETTAPSEN). A compositionally biased stretch (basic and acidic residues) spans 72-83 (KTTEKVDSRQLK). Positions 84-114 (DNTQTATADQPKVTMSDSATVKETSSNMQSP) are enriched in polar residues. Positions 115–132 (QNATASQSTTQTSNVTTN) are enriched in low complexity. Positions 133-160 (DKSSTTYSNETDKSNLTQAKNVSTTPKT) are enriched in polar residues. 2 consecutive CNA-B domains span residues 496 to 606 (KYNL…YKTP) and 607 to 717 (KYSL…EEET). The disordered stretch occupies residues 678-933 (TQTGTNTTED…NNSNNGTLFG (256 aa)). Composition is skewed to acidic residues over residues 685–695 (TEDDKDADGGE) and 712–892 (YYEE…DSDS). Residues 916-920 (LPETG) carry the LPXTG sorting signal motif. Positions 918–933 (ETGSENNNSNNGTLFG) are enriched in low complexity. Threonine 919 carries the post-translational modification Pentaglycyl murein peptidoglycan amidated threonine. The propeptide at 920-953 (GSENNNSNNGTLFGGLFAALGSLLLFGRRKKQNK) is removed by sortase.

The protein belongs to the serine-aspartate repeat-containing protein (SDr) family. Homodimerizes; via N2-Domain. Interacts with host NRXN1; this interaction mediates bacterial attachment to host cells.

Its subcellular location is the secreted. The protein localises to the cell wall. Its function is as follows. Cell surface-associated calcium-binding protein which plays an important role in adhesion and pathogenesis. Mediates interactions with components of the extracellular matrix such as host NRXN1 to promote bacterial adhesion. The sequence is that of Serine-aspartate repeat-containing protein C (sdrC) from Staphylococcus aureus (strain Mu50 / ATCC 700699).